The sequence spans 405 residues: Replication factor C large subunit (405 aa).

47–54 (GPPGVGKT) is a binding site for ATP.

It belongs to the activator 1 small subunits family. RfcL subfamily. In terms of assembly, heteromultimer composed of small subunits (RfcS) and large subunits (RfcL).

Its function is as follows. Part of the RFC clamp loader complex which loads the PCNA sliding clamp onto DNA. In Saccharolobus islandicus (strain Y.N.15.51 / Yellowstone #2) (Sulfolobus islandicus), this protein is Replication factor C large subunit.